The primary structure comprises 142 residues: Large ribosomal subunit protein uL13 (142 aa).

The protein belongs to the universal ribosomal protein uL13 family. In terms of assembly, part of the 50S ribosomal subunit.

Functionally, this protein is one of the early assembly proteins of the 50S ribosomal subunit, although it is not seen to bind rRNA by itself. It is important during the early stages of 50S assembly. This chain is Large ribosomal subunit protein uL13, found in Shigella boydii serotype 18 (strain CDC 3083-94 / BS512).